We begin with the raw amino-acid sequence, 218 residues long: Ribose-5-phosphate isomerase A (218 aa).

Residues Lys7, 28–31 (TGST), 81–84 (DGAD), and 94–97 (KGGG) contribute to the substrate site. Glu103 functions as the Proton acceptor in the catalytic mechanism. Residue Lys121 participates in substrate binding.

This sequence belongs to the ribose 5-phosphate isomerase family. Homodimer.

It carries out the reaction aldehydo-D-ribose 5-phosphate = D-ribulose 5-phosphate. It participates in carbohydrate degradation; pentose phosphate pathway; D-ribose 5-phosphate from D-ribulose 5-phosphate (non-oxidative stage): step 1/1. In terms of biological role, catalyzes the reversible conversion of ribose-5-phosphate to ribulose 5-phosphate. This chain is Ribose-5-phosphate isomerase A, found in Vibrio vulnificus (strain YJ016).